A 95-amino-acid polypeptide reads, in one-letter code: Protein TusB (95 aa).

Belongs to the DsrH/TusB family. Heterohexamer, formed by a dimer of trimers. The hexameric TusBCD complex contains 2 copies each of TusB, TusC and TusD. The TusBCD complex interacts with TusE.

It localises to the cytoplasm. Its function is as follows. Part of a sulfur-relay system required for 2-thiolation of 5-methylaminomethyl-2-thiouridine (mnm(5)s(2)U) at tRNA wobble positions. The sequence is that of Protein TusB from Sodalis glossinidius (strain morsitans).